The following is a 249-amino-acid chain: Derlin-2.2 (249 aa).

Over 1-21 the chain is Cytoplasmic; it reads MAQAVEEWYRQMPIITRSYLT. Residues 22–42 form a helical membrane-spanning segment; that stretch reads AAVVTTVGCTLEIISPYHLYL. Residues 43 to 96 lie on the Lumenal side of the membrane; it reads NPKLVVQHYEIWRLVTNFLYFRKMDLDFLFHMFFLARYCKLLEENSFRGRTADF. The chain crosses the membrane as a helical span at residues 97 to 117; that stretch reads FYMLLFGATVLTGIVLIGGMI. Topologically, residues 118 to 122 are cytoplasmic; it reads PYISE. Residues 123-143 traverse the membrane as a helical segment; it reads TFARILFLSNSLTFMMVYVWS. Over 144 to 152 the chain is Lumenal; sequence KHNPFIHMS. The chain crosses the membrane as a helical span at residues 153–173; that stretch reads FLGLFTFTAAYLPWVLLGFSI. The Cytoplasmic segment spans residues 174–249; sequence LVGSSTWVDL…GAIGVDPQAQ (76 aa).

Belongs to the derlin family. In terms of tissue distribution, expressed in roots, stalks, leaves, immature ears, embryo and endosperm.

The protein resides in the endoplasmic reticulum membrane. Functionally, may be involved in the degradation process of specific misfolded endoplasmic reticulum (ER) luminal proteins. This is Derlin-2.2 (DER2.2) from Zea mays (Maize).